The sequence spans 707 residues: DNA topoisomerase 1 (707 aa).

The region spanning 1–140 (MYAILAEKPS…IKRLWTSSMT (140 aa)) is the Toprim domain. The Topo IA-type catalytic domain occupies 157-596 (TLPLYYQAKA…HSKKLSSVLF (440 aa)). Residues 199 to 204 (SLGRVQ) form an interaction with DNA region. Y323 acts as the O-(5'-phospho-DNA)-tyrosine intermediate in catalysis.

This sequence belongs to the type IA topoisomerase family. In terms of assembly, monomer.

It catalyses the reaction ATP-independent breakage of single-stranded DNA, followed by passage and rejoining.. In terms of biological role, releases the supercoiling and torsional tension of DNA, which is introduced during the DNA replication and transcription, by transiently cleaving and rejoining one strand of the DNA duplex. Introduces a single-strand break via transesterification at a target site in duplex DNA. The scissile phosphodiester is attacked by the catalytic tyrosine of the enzyme, resulting in the formation of a DNA-(5'-phosphotyrosyl)-enzyme intermediate and the expulsion of a 3'-OH DNA strand. The free DNA strand then undergoes passage around the unbroken strand, thus removing DNA supercoils. Finally, in the religation step, the DNA 3'-OH attacks the covalent intermediate to expel the active-site tyrosine and restore the DNA phosphodiester backbone. This Alkalihalophilus pseudofirmus (strain ATCC BAA-2126 / JCM 17055 / OF4) (Bacillus pseudofirmus) protein is DNA topoisomerase 1 (topA).